Here is a 415-residue protein sequence, read N- to C-terminus: Putative competence-damage inducible protein (415 aa).

This sequence belongs to the CinA family.

The polypeptide is Putative competence-damage inducible protein (Listeria welshimeri serovar 6b (strain ATCC 35897 / DSM 20650 / CCUG 15529 / CIP 8149 / NCTC 11857 / SLCC 5334 / V8)).